The sequence spans 322 residues: Heat-inducible transcription repressor HrcA (322 aa).

The protein belongs to the HrcA family.

In terms of biological role, negative regulator of class I heat shock genes (grpE-dnaK-dnaJ and groELS operons). Prevents heat-shock induction of these operons. The polypeptide is Heat-inducible transcription repressor HrcA (Staphylococcus carnosus (strain TM300)).